The chain runs to 179 residues: Putative manganese efflux pump MntP (179 aa).

6 helical membrane passes run 4–24 (VLILAFALSMDAFAVSIGLGI), 39–59 (LFFGIFQALMPFLGFLGGIGL), 69–89 (IVAFILLLAIGGKMIYEAFNE), 102–122 (ILLTLAIATSLDAMAAGYSLH), 128–148 (IYLSLFVIGFTTFIISYIGVY), and 159–179 (SKAEILGGVVLILIGLKILLF).

This sequence belongs to the MntP (TC 9.B.29) family.

It is found in the cell inner membrane. Probably functions as a manganese efflux pump. In Aliarcobacter butzleri (strain RM4018) (Arcobacter butzleri), this protein is Putative manganese efflux pump MntP.